The primary structure comprises 141 residues: Translation initiation factor IF-1, chloroplastic (141 aa).

A chloroplast-targeting transit peptide spans 1–46; it reads MLQLCSTFRPQLLLPCQFRFTNGVLIPQINYVASNSVVNIRPMIRC. The disordered stretch occupies residues 49 to 69; sequence ASGGRGGANRSKPAKPQVKEG. One can recognise an S1-like domain in the interval 63 to 138; it reads KPQVKEGSNK…TKGRIIFRMS (76 aa).

Belongs to the IF-1 family. In terms of assembly, component of the 30S ribosomal translation pre-initiation complex which assembles on the 30S ribosome in the order IF-2 and IF-3, IF-1 and N-formylmethionyl-tRNA(fMet); mRNA recruitment can occur at any time during PIC assembly.

It is found in the plastid. Its subcellular location is the chloroplast. Its function is as follows. One of the essential components for the initiation of protein synthesis. Stabilizes the binding of IF-2 and IF-3 on the 30S subunit to which N-formylmethionyl-tRNA(fMet) subsequently binds. Helps modulate mRNA selection, yielding the 30S pre-initiation complex (PIC). Upon addition of the 50S ribosomal subunit IF-1, IF-2 and IF-3 are released leaving the mature 70S translation initiation complex. The protein is Translation initiation factor IF-1, chloroplastic of Arabidopsis thaliana (Mouse-ear cress).